Consider the following 84-residue polypeptide: NADH-ubiquinone oxidoreductase chain 4L (84 aa).

2 consecutive transmembrane segments (helical) span residues 19 to 39 and 50 to 70; these read ITLL…LIHI and IFSL…LSIL.

Belongs to the complex I subunit 4L family.

Its subcellular location is the mitochondrion membrane. The catalysed reaction is a ubiquinone + NADH + 5 H(+)(in) = a ubiquinol + NAD(+) + 4 H(+)(out). Core subunit of the mitochondrial membrane respiratory chain NADH dehydrogenase (Complex I) that is believed to belong to the minimal assembly required for catalysis. Complex I functions in the transfer of electrons from NADH to the respiratory chain. The immediate electron acceptor for the enzyme is believed to be ubiquinone. This chain is NADH-ubiquinone oxidoreductase chain 4L (NAD4L), found in Candida albicans (strain SC5314 / ATCC MYA-2876) (Yeast).